The chain runs to 110 residues: Phosphoribosyl-ATP pyrophosphatase (110 aa).

It belongs to the PRA-PH family.

The protein localises to the cytoplasm. It carries out the reaction 1-(5-phospho-beta-D-ribosyl)-ATP + H2O = 1-(5-phospho-beta-D-ribosyl)-5'-AMP + diphosphate + H(+). It functions in the pathway amino-acid biosynthesis; L-histidine biosynthesis; L-histidine from 5-phospho-alpha-D-ribose 1-diphosphate: step 2/9. This Pseudomonas syringae pv. syringae (strain B728a) protein is Phosphoribosyl-ATP pyrophosphatase.